A 152-amino-acid polypeptide reads, in one-letter code: Ubiquitin-conjugating enzyme E2 N (152 aa).

Positions 3–149 (GLPRRIIKET…ARAWTRLYAM (147 aa)) constitute a UBC core domain. The residue at position 82 (lysine 82) is an N6-acetyllysine. Cysteine 87 (glycyl thioester intermediate) is an active-site residue. A Glycyl lysine isopeptide (Lys-Gly) (interchain with G-Cter in ISG15) cross-link involves residue lysine 92. Phosphoserine is present on serine 131.

It belongs to the ubiquitin-conjugating enzyme family. In terms of assembly, heterodimer with UBE2V2. Interacts (UBE2V2-UBE2N heterodimer) with the E3 ligase STUB1 (via the U-box domain); the complex has a specific 'Lys-63'-linked polyubiquitination activity. Interacts with RNF8 and RNF168. Interacts with RNF11. Interacts with the E3 ligases, HLTF and SHPRH; the interactions promote the 'Lys-63'-linked polyubiquitination of PCNA upon genotoxic stress and lead to DNA repair. Interacts with ARIH2 (via RING-type 2). Interacts with OTUB1; leading to inhibit E2-conjugating activity. Interacts with GPS2; leading to inhibit E2-conjugating activity. Interacts with RIGI and RNF135; involved in RIGI ubiquitination and activation. In terms of processing, conjugation to ISG15 impairs formation of the thioester bond with ubiquitin but not interaction with UBE2V2.

It carries out the reaction S-ubiquitinyl-[E1 ubiquitin-activating enzyme]-L-cysteine + [E2 ubiquitin-conjugating enzyme]-L-cysteine = [E1 ubiquitin-activating enzyme]-L-cysteine + S-ubiquitinyl-[E2 ubiquitin-conjugating enzyme]-L-cysteine.. The protein operates within protein modification; protein ubiquitination. Its activity is regulated as follows. Activity is inhibited by binding to OTUB1, which prevents 'Lys-63'-linked polyubiquitination. Activity is inhibited by GPS2, leading to prevent 'Lys-63'-linked polyubiquitination. Its function is as follows. The UBE2V1-UBE2N and UBE2V2-UBE2N heterodimers catalyze the synthesis of non-canonical 'Lys-63'-linked polyubiquitin chains. This type of polyubiquitination does not lead to protein degradation by the proteasome. Mediates transcriptional activation of target genes. Plays a role in the control of progress through the cell cycle and differentiation. Plays a role in the error-free DNA repair pathway and contributes to the survival of cells after DNA damage. Acts together with the E3 ligases, HLTF and SHPRH, in the 'Lys-63'-linked poly-ubiquitination of PCNA upon genotoxic stress, which is required for DNA repair. Appears to act together with E3 ligase RNF5 in the 'Lys-63'-linked polyubiquitination of JKAMP thereby regulating JKAMP function by decreasing its association with components of the proteasome and ERAD. Promotes TRIM5 capsid-specific restriction activity and the UBE2V1-UBE2N heterodimer acts in concert with TRIM5 to generate 'Lys-63'-linked polyubiquitin chains which activate the MAP3K7/TAK1 complex which in turn results in the induction and expression of NF-kappa-B and MAPK-responsive inflammatory genes. Together with RNF135 and UB2V1, catalyzes the viral RNA-dependent 'Lys-63'-linked polyubiquitination of RIGI to activate the downstream signaling pathway that leads to interferon beta production. UBE2V1-UBE2N together with TRAF3IP2 E3 ubiquitin ligase mediate 'Lys-63'-linked polyubiquitination of TRAF6, a component of IL17A-mediated signaling pathway. The polypeptide is Ubiquitin-conjugating enzyme E2 N (Ube2n) (Rattus norvegicus (Rat)).